Here is a 65-residue protein sequence, read N- to C-terminus: Precursor peptide TigB (65 aa).

6 TIGSVS motif repeats span residues 16–21 (TIGSVS), 23–28 (TIGSVS), 33–38 (TIGSVS), 40–45 (TIGSVS), 47–52 (TIGSVS), and 54–59 (TIGSVS). Ile17, Ile24, Ile34, Ile41, Ile48, and Ile55 each carry methylcyclopropylglycine.

Is subject to maturation by TigE, that catalyzes the formation of methylcyclopropylglycine (mCPG) residues from isoleucine residues residing in the repeating TIGSVS motifs.

Its function is as follows. Precursor peptide which undergoes post-translational modifications by tailoring enzymes, leading to the mature natural product. The polypeptide is Precursor peptide TigB (Paramaledivibacter caminithermalis (strain DSM 15212 / CIP 107654 / DViRD3) (Clostridium caminithermale)).